Consider the following 139-residue polypeptide: ATP synthase epsilon chain (139 aa).

The protein belongs to the ATPase epsilon chain family. As to quaternary structure, F-type ATPases have 2 components, CF(1) - the catalytic core - and CF(0) - the membrane proton channel. CF(1) has five subunits: alpha(3), beta(3), gamma(1), delta(1), epsilon(1). CF(0) has three main subunits: a, b and c.

The protein resides in the cell inner membrane. Produces ATP from ADP in the presence of a proton gradient across the membrane. The chain is ATP synthase epsilon chain from Shigella boydii serotype 18 (strain CDC 3083-94 / BS512).